Reading from the N-terminus, the 363-residue chain is DNA replication and repair protein RecF (363 aa).

30-37 lines the ATP pocket; that stretch reads GDNAQGKT.

Belongs to the RecF family.

Its subcellular location is the cytoplasm. Its function is as follows. The RecF protein is involved in DNA metabolism; it is required for DNA replication and normal SOS inducibility. RecF binds preferentially to single-stranded, linear DNA. It also seems to bind ATP. This chain is DNA replication and repair protein RecF, found in Syntrophotalea carbinolica (strain DSM 2380 / NBRC 103641 / GraBd1) (Pelobacter carbinolicus).